The following is a 1043-amino-acid chain: Unconventional myosin-Ia (1043 aa).

A Myosin motor domain is found at 8–694 (VGVEDLVLLE…TLFYLEEQRR (687 aa)). Position 101 to 108 (101 to 108 (GESGAGKT)) interacts with ATP. The actin-binding stretch occupies residues 571 to 593 (VTTLMKNLYSKNPNYIRCIKPNE). IQ domains are found at residues 697–719 (LQQL…HYQL), 720–742 (MRKS…HYRK), and 743–772 (MKAS…SGAA). Residues 858–1042 (KASYPQSVPI…KGSRCLEVTV (185 aa)) enclose the TH1 domain.

The protein belongs to the TRAFAC class myosin-kinesin ATPase superfamily. Myosin family. Phosphorylated by ALPK1.

Its function is as follows. Involved in directing the movement of organelles along actin filaments. The chain is Unconventional myosin-Ia (MYO1A) from Bos taurus (Bovine).